A 428-amino-acid chain; its full sequence is GTPase Obg (428 aa).

Residues 1-158 enclose the Obg domain; the sequence is MFVDQTKIDV…RTLRLELKVL (158 aa). One can recognise an OBG-type G domain in the interval 159-328; sequence ADVGLVGFPS…LMGKTADLVE (170 aa). GTP is bound by residues 165-172, 190-194, 212-215, 282-285, and 309-311; these read GFPSVGKS, FTTLT, DLPG, TQMD, and SSV. 2 residues coordinate Mg(2+): Ser172 and Thr192. The OCT domain maps to 350–428; the sequence is YKKPEDEGFK…IADFTFEFVD (79 aa).

The protein belongs to the TRAFAC class OBG-HflX-like GTPase superfamily. OBG GTPase family. Monomer. Mg(2+) serves as cofactor.

It localises to the cytoplasm. Its function is as follows. An essential GTPase which binds GTP, GDP and possibly (p)ppGpp with moderate affinity, with high nucleotide exchange rates and a fairly low GTP hydrolysis rate. Plays a role in control of the cell cycle, stress response, ribosome biogenesis and in those bacteria that undergo differentiation, in morphogenesis control. The protein is GTPase Obg of Lactobacillus johnsonii (strain CNCM I-12250 / La1 / NCC 533).